Reading from the N-terminus, the 546-residue chain is Arginine--tRNA ligase (546 aa).

The 'HIGH' region motif lies at 122–132 (ANPTGPFTVGH).

Belongs to the class-I aminoacyl-tRNA synthetase family. Monomer.

Its subcellular location is the cytoplasm. The catalysed reaction is tRNA(Arg) + L-arginine + ATP = L-arginyl-tRNA(Arg) + AMP + diphosphate. This Thermotoga petrophila (strain ATCC BAA-488 / DSM 13995 / JCM 10881 / RKU-1) protein is Arginine--tRNA ligase.